Reading from the N-terminus, the 685-residue chain is Sodium-dependent phosphate transporter 1-B (685 aa).

Helical transmembrane passes span 21–41 (IMAP…VLAF), 66–86 (ACIL…AKVS), 106–126 (LMAG…AASF), 162–182 (IVLS…LLFF), 207–227 (ACTI…LLGF), and 234–254 (GIIL…WFFV). Residues 489 to 511 (EGCIEDVVTDRKSSSSSLEERHD) are disordered. A compositionally biased stretch (basic and acidic residues) spans 496–511 (VTDRKSSSSSLEERHD). Helical transmembrane passes span 517-537 (VSLL…FAHG), 565-585 (ATPI…LWVW), 606-626 (FSIE…GLPI), and 656-676 (IFLA…GIMA).

The protein belongs to the inorganic phosphate transporter (PiT) (TC 2.A.20) family.

Its subcellular location is the membrane. Its function is as follows. Sodium-phosphate symporter which plays a fundamental housekeeping role in phosphate transport. This Xenopus laevis (African clawed frog) protein is Sodium-dependent phosphate transporter 1-B (slc20a1-b).